Reading from the N-terminus, the 591-residue chain is Aspartate--tRNA ligase (591 aa).

Glu172 lines the L-aspartate pocket. Residues 196–199 (QLFK) form an aspartate region. Arg218 contributes to the L-aspartate binding site. Residues 218 to 220 (RDE) and Gln227 contribute to the ATP site. Position 449 (His449) interacts with L-aspartate. ATP is bound at residue Glu483. An L-aspartate-binding site is contributed by Arg490. 535–538 (GLDR) contributes to the ATP binding site.

The protein belongs to the class-II aminoacyl-tRNA synthetase family. Type 1 subfamily. Homodimer.

It localises to the cytoplasm. The enzyme catalyses tRNA(Asp) + L-aspartate + ATP = L-aspartyl-tRNA(Asp) + AMP + diphosphate. Functionally, catalyzes the attachment of L-aspartate to tRNA(Asp) in a two-step reaction: L-aspartate is first activated by ATP to form Asp-AMP and then transferred to the acceptor end of tRNA(Asp). In Actinobacillus pleuropneumoniae serotype 5b (strain L20), this protein is Aspartate--tRNA ligase.